The primary structure comprises 428 residues: Elongation factor 1-alpha (428 aa).

The region spanning 5–217 is the tr-type G domain; it reads KPHVNIVFIG…DQIPEPEKPV (213 aa). The interval 14–21 is G1; it reads GHVDHGKS. 14–21 is a GTP binding site; sequence GHVDHGKS. Mg(2+) is bound at residue S21. The interval 68-72 is G2; sequence GITID. Residues 89-92 form a G3 region; that stretch reads DAPG. GTP contacts are provided by residues 89 to 93 and 144 to 147; these read DAPGH and NKMD. Residues 144-147 are G4; the sequence is NKMD. A G5 region spans residues 181 to 183; sequence SAW.

Belongs to the TRAFAC class translation factor GTPase superfamily. Classic translation factor GTPase family. EF-Tu/EF-1A subfamily.

Its subcellular location is the cytoplasm. The catalysed reaction is GTP + H2O = GDP + phosphate + H(+). In terms of biological role, GTP hydrolase that promotes the GTP-dependent binding of aminoacyl-tRNA to the A-site of ribosomes during protein biosynthesis. This is Elongation factor 1-alpha from Pyrococcus furiosus (strain ATCC 43587 / DSM 3638 / JCM 8422 / Vc1).